The following is a 348-amino-acid chain: Xaa-Pro dipeptidase (348 aa).

Residues Asp-209, Asp-220, His-284, Glu-313, and Glu-327 each coordinate Co(2+).

This sequence belongs to the peptidase M24B family. Archaeal-type prolidase subfamily. Homodimer. Requires Co(2+) as cofactor. The cofactor is Mn(2+).

Its subcellular location is the cytoplasm. The catalysed reaction is Xaa-L-Pro dipeptide + H2O = an L-alpha-amino acid + L-proline. Its function is as follows. Splits dipeptides with a prolyl in the C-terminal position and a nonpolar amino acid at the N-terminal position. The chain is Xaa-Pro dipeptidase (pepQ) from Pyrococcus furiosus (strain ATCC 43587 / DSM 3638 / JCM 8422 / Vc1).